We begin with the raw amino-acid sequence, 204 residues long: 8-oxoguanine DNA glycosylase/AP lyase (204 aa).

Active-site residues include lysine 128 and aspartate 146.

It belongs to the type-2 OGG1 family.

The catalysed reaction is 2'-deoxyribonucleotide-(2'-deoxyribose 5'-phosphate)-2'-deoxyribonucleotide-DNA = a 3'-end 2'-deoxyribonucleotide-(2,3-dehydro-2,3-deoxyribose 5'-phosphate)-DNA + a 5'-end 5'-phospho-2'-deoxyribonucleoside-DNA + H(+). Functionally, catalyzes the excision of an oxidatively damaged form of guanine (7,8-dihydro-8-oxoguanine = 8-oxoG) from DNA. Also cleaves the DNA backbone at apurinic/apyrimidinic sites (AP sites). The chain is 8-oxoguanine DNA glycosylase/AP lyase from Sulfurisphaera tokodaii (strain DSM 16993 / JCM 10545 / NBRC 100140 / 7) (Sulfolobus tokodaii).